An 82-amino-acid polypeptide reads, in one-letter code: Small ribosomal subunit protein bS16 (82 aa).

This sequence belongs to the bacterial ribosomal protein bS16 family.

This Glaesserella parasuis serovar 5 (strain SH0165) (Haemophilus parasuis) protein is Small ribosomal subunit protein bS16.